Reading from the N-terminus, the 354-residue chain is uncharacterized protein (354 aa).

An N-terminal signal peptide occupies residues 1–21; it reads MRYLLIVITFFMGFSSLPAWA.

This sequence to E.coli YbgO.

Functionally, may be involved in a fimbrial system chaperoned by YqiH and exported by YqiG. This is an uncharacterized protein from Escherichia coli (strain K12).